The sequence spans 272 residues: tRNA pseudouridine synthase A (272 aa).

Aspartate 52 functions as the Nucleophile in the catalytic mechanism. Substrate is bound at residue tyrosine 110.

Belongs to the tRNA pseudouridine synthase TruA family. As to quaternary structure, homodimer.

The catalysed reaction is uridine(38/39/40) in tRNA = pseudouridine(38/39/40) in tRNA. In terms of biological role, formation of pseudouridine at positions 38, 39 and 40 in the anticodon stem and loop of transfer RNAs. This is tRNA pseudouridine synthase A from Cupriavidus taiwanensis (strain DSM 17343 / BCRC 17206 / CCUG 44338 / CIP 107171 / LMG 19424 / R1) (Ralstonia taiwanensis (strain LMG 19424)).